We begin with the raw amino-acid sequence, 365 residues long: Peptide chain release factor 2 (365 aa).

At Q252 the chain carries N5-methylglutamine.

Belongs to the prokaryotic/mitochondrial release factor family. Post-translationally, methylated by PrmC. Methylation increases the termination efficiency of RF2.

It is found in the cytoplasm. Its function is as follows. Peptide chain release factor 2 directs the termination of translation in response to the peptide chain termination codons UGA and UAA. This Proteus mirabilis (strain HI4320) protein is Peptide chain release factor 2.